Here is a 58-residue protein sequence, read N- to C-terminus: Birtoxin (58 aa).

In terms of domain architecture, LCN-type CS-alpha/beta spans 3-58; the sequence is VPGNYPLDKDGNTYKCFLLGGNEECLNVCKLHGVQYGYCYASKCWCEYLEDDKDSV. Disulfide bonds link Cys18–Cys41, Cys27–Cys46, and Cys31–Cys48.

In terms of tissue distribution, expressed by the venom gland.

It is found in the secreted. Functionally, beta toxins bind voltage-independently at site-4 of sodium channels (Nav) and shift the voltage of activation toward more negative potentials thereby affecting sodium channel activation and promoting spontaneous and repetitive firing. Moderately toxic, but very high abundant. Does not target reptilian channels. Does not produce effect when administered to blowfly and cabbage looper larvae. In mice, produces convulsions, tremors, increased ventilation and, subsequently, death. In Parabuthus transvaalicus (Transvaal thick-tailed scorpion), this protein is Birtoxin.